We begin with the raw amino-acid sequence, 1411 residues long: Alpha-latroinsectotoxin-Lt1a (1411 aa).

A propeptide spanning residues 1–35 is cleaved from the precursor; that stretch reads ACSSPEVSIFHFFVYAGSFVKNFKKMKGSSAISKR. Residues 245–264 form a helix H8 is the probable transmembrane region of the tetrameric pore inserted in the target cell membrane region; that stretch reads ALYALFYGTETFISIMFYLV. ANK repeat units lie at residues 462–495, 499–528, 533–562, 567–597, 601–630, 634–663, 667–697, 702–732, 736–765, 769–798, 802–831, 835–864, 869–898, 902–931, 935–965, 968–999, 1000–1029, 1080–1109, 1112–1142, and 1146–1175; these read DIHR…NVSE, LGRG…NLLE, NGYT…DVNV, DLFT…DLNA, SGFT…VINI, VGLT…YLND, NGMT…NINA, KKWT…NIRL, GGIN…DVTR, KGFS…NVND, SGVT…DIKA, NSQM…SLMN, RNEY…NVNE, NGNT…NFRL, ERKT…NLQA, RGKT…LNES, ECNP…NPAE, QENT…DPNQ, DGDP…DINT, and ERFT…DVNA. A propeptide spanning residues 1196–1411 is cleaved from the precursor; the sequence is QSSRFLRSGH…KVNSNVSQIK (216 aa). Positions 1230–1249 are enriched in polar residues; that stretch reads DKLTQQISSKGTRSDSNSTE. The segment at 1230–1254 is disordered; the sequence is DKLTQQISSKGTRSDSNSTEGKMHS. One copy of the ANK 21 repeat lies at 1331-1361; it reads NVHSKIYKAIMSGRRSVISEMLCSFAEEYSK.

It belongs to the cationic peptide 01 (latrotoxin) family. 02 (alpha-latroinsectotoxin) subfamily. In terms of assembly, homotetramer in membranes. As to expression, expressed by the venom gland.

Its subcellular location is the secreted. It is found in the target cell membrane. Functionally, insecticidal presynaptic neurotoxin that induces massive neurotransmitter release at insect (but not vertebrate) neuromuscular junctions. Native toxin forms cation-permeable pores (with high permeability to calcium) in lipid membranes locust muscle membrane and artificial lipid bilayers. May bind to insect neurexin-1 homolog, insect adhesion G protein-coupled receptor L1 homolog, and insect receptor-type tyrosine-protein phosphatase S homolog, and induces neurotransmitter exocytosis both by forming tetrameric pores in membranes and signaling via G protein-coupled receptor. Oligomerization is a process independent of divalent cations. The toxin forms channels with 0.55-0.58 nm entrance diameter and a relatively small conductance in planar phospholipid membranes. This chain is Alpha-latroinsectotoxin-Lt1a, found in Latrodectus tredecimguttatus (Mediterranean black widow spider).